We begin with the raw amino-acid sequence, 328 residues long: Malate dehydrogenase (328 aa).

13–19 (GGKGQIA) is an NAD(+) binding site. Substrate-binding residues include Arg94 and Arg100. Residues Asn107, Gln114, and 131 to 133 (VGN) contribute to the NAD(+) site. Residues Asn133 and Arg164 each coordinate substrate. His189 acts as the Proton acceptor in catalysis.

It belongs to the LDH/MDH superfamily. MDH type 2 family.

It catalyses the reaction (S)-malate + NAD(+) = oxaloacetate + NADH + H(+). In terms of biological role, catalyzes the reversible oxidation of malate to oxaloacetate. In Chlamydia pneumoniae (Chlamydophila pneumoniae), this protein is Malate dehydrogenase.